Reading from the N-terminus, the 221-residue chain is Placenta growth factor (221 aa).

The first 18 residues, 1–18 (MPVMRLFPCFLQLLAGLA), serve as a signal peptide directing secretion. N33 carries N-linked (GlcNAc...) asparagine glycosylation. Disulfide bonds link C52-C94, C83-C128, and C87-C130. Residue N101 is glycosylated (N-linked (GlcNAc...) asparagine). Positions 175–221 (QSAVWPSSPVPEEIPRMHPGRNGKKQQRKPLREKMKPERCGDAVPRR) are disordered. Residues 192–203 (HPGRNGKKQQRK) are compositionally biased toward basic residues. Residues 193-213 (PGRNGKKQQRKPLREKMKPER) are heparin-binding. A compositionally biased stretch (basic and acidic residues) spans 204–221 (PLREKMKPERCGDAVPRR).

This sequence belongs to the PDGF/VEGF growth factor family. In terms of assembly, antiparallel homodimer; disulfide-linked. Also found as heterodimer with VEGFA/VEGF. Isoform PlGF-3 is found both as homodimer and as monomer. Post-translationally, N-glycosylated. In terms of tissue distribution, while the three isoforms are present in most placental tissues, PlGF-2 is specific to early (8 week) placenta and only PlGF-1 is found in the colon and mammary carcinomas.

The protein localises to the secreted. Growth factor active in angiogenesis and endothelial cell growth, stimulating their proliferation and migration. It binds to the receptor FLT1/VEGFR-1. Isoform PlGF-2 binds NRP1/neuropilin-1 and NRP2/neuropilin-2 in a heparin-dependent manner. Also promotes cell tumor growth. The protein is Placenta growth factor (PGF) of Homo sapiens (Human).